The primary structure comprises 409 residues: MVLAAIPSPSRGVVHLGPVPLRAYALMIIIGVFVAVFVTGRRLRARGMDPMVASEVAYWAVPFGIVGARVYHVVSTPAAYFGRDGNVLDVIKIWNGGLGIWGAIAGGAFGAWLATRRYGISLALFGDAAAPGIILAQAIGRWGNWFNQELYGKASTLPWAVRIDEKHQIIPGVSTYQPTFLYECLWNLVVAGILLVVDRRHRLGRGKLFCLYVALYTFGRLWIEMLRIDTANQILGLRVNIWTSIVVCLGALLALAVTRSPVDPNLSREEQEALGIARSRPAARSTVTTAGTADQRAAAPDSAGPDSAALDSVGPDSVDPDLGGPDPADPGSAGSVPAAAVPDASGSTATTATTATTATTATTATTATTATTATTGVPAGSQQSRGLATRLPASGGHTSAVPPEEPQLP.

The next 4 membrane-spanning stretches (helical) occupy residues 18 to 38 (PVPLRAYALMIIIGVFVAVFV), 48 to 68 (MDPMVASEVAYWAVPFGIVGA), 93 to 113 (IWNGGLGIWGAIAGGAFGAWL), and 119 to 139 (GISLALFGDAAAPGIILAQAI). Arg-141 is a binding site for a 1,2-diacyl-sn-glycero-3-phospho-(1'-sn-glycerol). The next 2 helical transmembrane spans lie at 177 to 197 (QPTFLYECLWNLVVAGILLVV) and 234 to 254 (ILGLRVNIWTSIVVCLGALLA). Residues 273 to 409 (ALGIARSRPA…AVPPEEPQLP (137 aa)) are disordered. Composition is skewed to low complexity over residues 297-309 (AAAPDSAGPDSAA), 320-335 (PDLGGPDPADPGSAGS), and 348-375 (TATTATTATTATTATTATTATTATTATT).

The protein belongs to the Lgt family.

Its subcellular location is the cell membrane. The catalysed reaction is L-cysteinyl-[prolipoprotein] + a 1,2-diacyl-sn-glycero-3-phospho-(1'-sn-glycerol) = an S-1,2-diacyl-sn-glyceryl-L-cysteinyl-[prolipoprotein] + sn-glycerol 1-phosphate + H(+). It functions in the pathway protein modification; lipoprotein biosynthesis (diacylglyceryl transfer). In terms of biological role, catalyzes the transfer of the diacylglyceryl group from phosphatidylglycerol to the sulfhydryl group of the N-terminal cysteine of a prolipoprotein, the first step in the formation of mature lipoproteins. The chain is Phosphatidylglycerol--prolipoprotein diacylglyceryl transferase from Frankia casuarinae (strain DSM 45818 / CECT 9043 / HFP020203 / CcI3).